We begin with the raw amino-acid sequence, 135 residues long: Interleukin-4 (135 aa).

A signal peptide spans 1 to 24 (MGLTYQLIPVLVCLLVCTSHFVHG). Intrachain disulfides connect C27–C135, C48–C85, and C70–C105. An N-linked (GlcNAc...) asparagine glycan is attached at N62.

Belongs to the IL-4/IL-13 family.

The protein localises to the secreted. Participates in at least several B-cell activation processes as well as of other cell types. It is a costimulator of DNA-synthesis. It induces the expression of class II MHC molecules on resting B-cells. It enhances both secretion and cell surface expression of IgE and IgG1. It also regulates the expression of the low affinity Fc receptor for IgE (CD23) on both lymphocytes and monocytes. Positively regulates IL31RA expression in macrophages. Stimulates autophagy in dendritic cells by interfering with mTORC1 signaling and through the induction of RUFY4. The protein is Interleukin-4 (IL4) of Bubalus carabanensis (Swamp type water buffalo).